Here is a 127-residue protein sequence, read N- to C-terminus: Small ribosomal subunit protein uS13 (127 aa).

Residues 93-127 (RRGMPVRGQRTRTNARTRRGRRGQAIGIKKKATKK) are disordered.

The protein belongs to the universal ribosomal protein uS13 family. Part of the 30S ribosomal subunit. Forms a loose heterodimer with protein S19. Forms two bridges to the 50S subunit in the 70S ribosome.

In terms of biological role, located at the top of the head of the 30S subunit, it contacts several helices of the 16S rRNA. In the 70S ribosome it contacts the 23S rRNA (bridge B1a) and protein L5 of the 50S subunit (bridge B1b), connecting the 2 subunits; these bridges are implicated in subunit movement. Contacts the tRNAs in the A and P-sites. In Chloroflexus aurantiacus (strain ATCC 29366 / DSM 635 / J-10-fl), this protein is Small ribosomal subunit protein uS13.